A 1381-amino-acid chain; its full sequence is Serine-aspartate repeat-containing protein D (1381 aa).

The N-terminal stretch at 1–35 (MLNRENKTAITRKGMVSNRLNKFSIRKYTVGTASI) is a signal peptide. Positions 23-34 (FSIRKYTVGTAS) match the YSIRK-G/S signaling motif motif. Positions 36–568 (LVGTTLIFGL…NNQSGGAGQE (533 aa)) are ligand binding A region. The segment at 54–185 (ESTNKELNEA…NKKVDAKTES (132 aa)) is disordered. 2 stretches are compositionally biased toward polar residues: residues 62-71 (EATTSASDNQ) and 94-108 (EMVSSQGNETTSNGN). Positions 130-145 (KSDEQASPKSTNEDLN) are enriched in basic and acidic residues. Composition is skewed to polar residues over residues 146–155 (TKQTISNQEA) and 163–173 (NKSVVNVQPTN). Residues 174–183 (EENKKVDAKT) are compositionally biased toward basic and acidic residues. CNA-B domains are found at residues 569-680 (VYKI…IYKP), 681-791 (KYNL…YKTP), 792-901 (KYNL…FYKP), 902-1012 (TYNL…YKTP), and 1013-1123 (KYSL…EEET). 3 disordered regions span residues 857-883 (ETPSGYTPTQVGSGTDEGIDSNGTSTT), 972-992 (YTPTSVTSGNDTEKDSNGLTT), and 1078-1357 (EKPA…SNNA). Polar residues-rich tracts occupy residues 860 to 869 (SGYTPTQVGS) and 972 to 981 (YTPTSVTSGN). Composition is skewed to acidic residues over residues 1091–1101 (TEDDKDADGGE), 1118–1134 (YYEEETSDSDSDSDSDS), 1142–1164 (SDSDSDSDSDSDSDSDSDSDSDS), and 1172–1320 (SDSD…DSDS). Positions 1344–1348 (LPETG) match the LPXTG sorting signal motif. A Pentaglycyl murein peptidoglycan amidated threonine modification is found at T1347. A propeptide spans 1348 to 1381 (GNENSGSNNATLFGGLFAALGSLLLFGRRKKQNK) (removed by sortase).

The protein belongs to the serine-aspartate repeat-containing protein (SDr) family. Interacts with host DSG1; this interaction increases S.aureus adherence to keratinocytes.

The protein localises to the secreted. It is found in the cell wall. In terms of biological role, cell surface-associated calcium-binding protein which plays an important role in adhesion and pathogenesis. Mediates interactions with components of the extracellular matrix such as host DSG1 to promote bacterial adhesion to host cells. Contributes to the resistance to killing by innate immune components such as neutrophils present in blood and thus attenuates bacterial clearance. This chain is Serine-aspartate repeat-containing protein D (sdrD), found in Staphylococcus aureus (strain USA300).